Consider the following 103-residue polypeptide: Large ribosomal subunit protein bL21 (103 aa).

The protein belongs to the bacterial ribosomal protein bL21 family. As to quaternary structure, part of the 50S ribosomal subunit. Contacts protein L20.

This protein binds to 23S rRNA in the presence of protein L20. The protein is Large ribosomal subunit protein bL21 of Paraburkholderia phytofirmans (strain DSM 17436 / LMG 22146 / PsJN) (Burkholderia phytofirmans).